The chain runs to 489 residues: Cysteine--tRNA ligase (489 aa).

Cys29 contacts Zn(2+). Positions 31–41 (VTVYDYCHLGH) match the 'HIGH' region motif. Residues Cys215, His240, and Glu244 each coordinate Zn(2+). Residues 272–276 (KMSKS) carry the 'KMSKS' region motif. Lys275 is an ATP binding site.

It belongs to the class-I aminoacyl-tRNA synthetase family. As to quaternary structure, monomer. The cofactor is Zn(2+).

It is found in the cytoplasm. It carries out the reaction tRNA(Cys) + L-cysteine + ATP = L-cysteinyl-tRNA(Cys) + AMP + diphosphate. The polypeptide is Cysteine--tRNA ligase (Trichodesmium erythraeum (strain IMS101)).